We begin with the raw amino-acid sequence, 163 residues long: Phosphopantetheine adenylyltransferase (163 aa).

Thr9 contributes to the substrate binding site. Residues 9–10 (TF) and His17 contribute to the ATP site. Substrate contacts are provided by Lys41, Thr73, and Arg87. ATP contacts are provided by residues 88–90 (GLR), Glu98, and 123–129 (FSFISSS).

The protein belongs to the bacterial CoaD family. Homohexamer. Requires Mg(2+) as cofactor.

It localises to the cytoplasm. It carries out the reaction (R)-4'-phosphopantetheine + ATP + H(+) = 3'-dephospho-CoA + diphosphate. The protein operates within cofactor biosynthesis; coenzyme A biosynthesis; CoA from (R)-pantothenate: step 4/5. Reversibly transfers an adenylyl group from ATP to 4'-phosphopantetheine, yielding dephospho-CoA (dPCoA) and pyrophosphate. The sequence is that of Phosphopantetheine adenylyltransferase from Desulfitobacterium hafniense (strain DSM 10664 / DCB-2).